Consider the following 106-residue polypeptide: Thioredoxin-like protein YusE (106 aa).

In terms of domain architecture, Thioredoxin spans 1–101 (MKELQEHELD…LYELIKQKSS (101 aa)). Residues Cys-26 and Cys-29 are joined by a disulfide bond.

This chain is Thioredoxin-like protein YusE (yusE), found in Bacillus subtilis (strain 168).